The chain runs to 300 residues: Protein Bel-1 (300 aa).

Disordered stretches follow at residues 1-20 (MDSY…QDLQ), 26-50 (VGPE…RRPR), and 185-237 (KPST…GDTV). A compositionally biased stretch (polar residues) spans 11 to 20 (ASTSGLQDLQ). A DNA-binding region spans residues 89–200 (SKSICKRLIL…PEGPKPRRRH (112 aa)). The span at 201–210 (DPVLRCDMFE) shows a compositional bias: basic and acidic residues. The span at 211 to 222 (KHHKPRPKRSRK) shows a compositional bias: basic residues. The short motif at 214 to 223 (KPRPKRSRKR) is the Nuclear localization signal element. A transactivation domain region spans residues 224 to 300 (SIDHESCASS…PSGSGEHSVL (77 aa)).

Homodimer or homomultimer. Forms complexes with the host nuclear factors NFIA, NFIB, NFIC or NFIX.

It is found in the host nucleus. Transcriptional transactivator that activates the viral internal promoter (IP), thereby enhancing its own expression. This transactivation is repressed by nuclear factor I. Also transactivates the long terminal repeat (LTR) promoter, thereby inducing structural gene expression, initiating the late phase of infection. It is therefore a key regulator of viral gene expression. It directly binds to and activates DNA target sites of viral promoters and those of distinct cellular genes. Required for viral replication. In Pan troglodytes (Chimpanzee), this protein is Protein Bel-1 (bel1).